A 1164-amino-acid chain; its full sequence is DNA-directed RNA polymerase subunit beta (1164 aa).

This sequence belongs to the RNA polymerase beta chain family. The RNAP catalytic core consists of 2 alpha, 1 beta, 1 beta' and 1 omega subunit. When a sigma factor is associated with the core the holoenzyme is formed, which can initiate transcription.

It catalyses the reaction RNA(n) + a ribonucleoside 5'-triphosphate = RNA(n+1) + diphosphate. Functionally, DNA-dependent RNA polymerase catalyzes the transcription of DNA into RNA using the four ribonucleoside triphosphates as substrates. The polypeptide is DNA-directed RNA polymerase subunit beta (Saccharopolyspora erythraea (strain ATCC 11635 / DSM 40517 / JCM 4748 / NBRC 13426 / NCIMB 8594 / NRRL 2338)).